The primary structure comprises 143 residues: Hemoglobin subunit alpha (143 aa).

Serine 2 is subject to N-acetylserine. The region spanning serine 2–arginine 143 is the Globin domain. Residue histidine 60 participates in O2 binding. A heme b-binding site is contributed by histidine 89.

The protein belongs to the globin family. As to quaternary structure, heterotetramer of two alpha chains and two beta chains. As to expression, red blood cells.

In terms of biological role, involved in oxygen transport from gills to the various peripheral tissues. This Cyprinus carpio (Common carp) protein is Hemoglobin subunit alpha (hba).